We begin with the raw amino-acid sequence, 1072 residues long: RIMS-binding protein 2 (1072 aa).

The region spanning 181 to 248 (GKVHLCVARY…PSNFVDFIQD (68 aa)) is the SH3 1 domain. 3 consecutive Fibronectin type-III domains span residues 311–404 (VPYP…GKDV), 407–489 (APSQ…KKEA), and 503–604 (PPQD…VPPA). Disordered regions lie at residues 597-681 (PDLL…APVS) and 713-800 (SAGQ…TSHN). Residues 599–615 (LLVPPAPHPRTAPPPKP) show a composition bias toward pro residues. A compositionally biased stretch (basic and acidic residues) spans 620-635 (MDTKDQHLGPHVKVDE). Positions 660 to 670 (GPGRRSPSPSR) are enriched in low complexity. Phosphoserine occurs at positions 720 and 728. 2 stretches are compositionally biased toward basic and acidic residues: residues 730–743 (EVKR…DFLK) and 754–765 (CHGDEYHTESSR). Positions 771–781 (DIMEEDEEELY) are enriched in acidic residues. Residues S852 and S859 each carry the phosphoserine modification. Residue T861 is modified to Phosphothreonine. 2 SH3 domains span residues 868 to 936 (LPAR…EIHA) and 972 to 1039 (VPTR…EVPD). Residues 1044–1072 (HLSDAPPHYSHDPPMRSKAKRKKSVHFTP) form a disordered region. A compositionally biased stretch (basic residues) spans 1060-1072 (SKAKRKKSVHFTP).

Belongs to the RIMBP family. Interacts with RIMS1, RIMS2, CACNA1D and CACNA1B, and potentially with other Ca(2+) channel alpha-1 isoforms.

The protein resides in the cell membrane. Its subcellular location is the synapse. Plays a role in the synaptic transmission as bifunctional linker that interacts simultaneously with RIMS1, RIMS2, CACNA1D and CACNA1B. In Mus musculus (Mouse), this protein is RIMS-binding protein 2 (Rimbp2).